The following is a 74-amino-acid chain: Conotoxin Cal27 (74 aa).

The signal sequence occupies residues 1–19 (MSGTGVLLLTLLLLVAMAA).

In terms of processing, may contain 4 disulfide bonds. As to expression, expressed by the venom duct.

Its subcellular location is the secreted. Functionally, probable neurotoxin. This is Conotoxin Cal27 from Californiconus californicus (California cone).